Consider the following 108-residue polypeptide: Putative membrane protein insertion efficiency factor (108 aa).

The protein belongs to the UPF0161 family.

Its subcellular location is the cell inner membrane. Functionally, could be involved in insertion of integral membrane proteins into the membrane. In Chelativorans sp. (strain BNC1), this protein is Putative membrane protein insertion efficiency factor.